Consider the following 269-residue polypeptide: NAD-capped RNA hydrolase NudC (269 aa).

Arg-74 contributes to the substrate binding site. Residues Cys-103, Cys-106, Cys-121, and Cys-124 each coordinate Zn(2+). Tyr-129 is a binding site for substrate. A Nudix hydrolase domain is found at 130 to 253 (PRIFPCIIVA…TIARQLIENT (124 aa)). Residues Ala-163, Glu-179, and Glu-183 each contribute to the a divalent metal cation site. A Nudix box motif is present at residues 164–185 (GFLEVGETLEQCVAREVKEETG). 197 to 204 (QPWAFPSS) is a binding site for substrate. Glu-224 contributes to the a divalent metal cation binding site. Ala-246 provides a ligand contact to substrate.

The protein belongs to the Nudix hydrolase family. NudC subfamily. As to quaternary structure, homodimer. The cofactor is Mg(2+). Mn(2+) serves as cofactor. It depends on Zn(2+) as a cofactor.

The enzyme catalyses a 5'-end NAD(+)-phospho-ribonucleoside in mRNA + H2O = a 5'-end phospho-adenosine-phospho-ribonucleoside in mRNA + beta-nicotinamide D-ribonucleotide + 2 H(+). The catalysed reaction is NAD(+) + H2O = beta-nicotinamide D-ribonucleotide + AMP + 2 H(+). It catalyses the reaction NADH + H2O = reduced beta-nicotinamide D-ribonucleotide + AMP + 2 H(+). Functionally, mRNA decapping enzyme that specifically removes the nicotinamide adenine dinucleotide (NAD) cap from a subset of mRNAs by hydrolyzing the diphosphate linkage to produce nicotinamide mononucleotide (NMN) and 5' monophosphate mRNA. The NAD-cap is present at the 5'-end of some mRNAs and stabilizes RNA against 5'-processing. Has preference for mRNAs with a 5'-end purine. Catalyzes the hydrolysis of a broad range of dinucleotide pyrophosphates. In Vibrio atlanticus (strain LGP32) (Vibrio splendidus (strain Mel32)), this protein is NAD-capped RNA hydrolase NudC.